Reading from the N-terminus, the 317-residue chain is EMP1 trafficking protein-7 (317 aa).

Positions 1–32 are disordered; sequence MAKDSQKNLNVSNNNNVQCTMGRSSQNINKSD. Low complexity predominate over residues 8–17; sequence NLNVSNNNNV. Over residues 18–30 the composition is skewed to polar residues; it reads QCTMGRSSQNINK. The short motif at 86-90 is the PEXEL motif element; the sequence is KSLAE. The helical transmembrane segment at 230 to 250 threads the bilayer; sequence VLNALLPFIFIAFVYCTITML. The interval 265-317 is essential for its function; the sequence is KILKMHYDYKHKENNNNNNNNNNNNNNNNNNNNNNNNNNNNNNNNNNKKSKKN. The disordered stretch occupies residues 277-317; that stretch reads ENNNNNNNNNNNNNNNNNNNNNNNNNNNNNNNNNNKKSKKN. Residues 279–311 show a composition bias toward low complexity; sequence NNNNNNNNNNNNNNNNNNNNNNNNNNNNNNNNN.

In terms of assembly, may interact with MESA. May interact with J-dot compartment protein PF3D7_0801000.

It localises to the host cytoplasm. It is found in the vesicle. The protein resides in the membrane. During the asexual blood stage, plays an essential role in the recruitment and/or formation of EMP1-containing vesicles at the Maurer's clefts and their subsequent transfer to the host erythrocyte cell membrane. In Plasmodium falciparum (isolate 3D7), this protein is EMP1 trafficking protein-7.